The primary structure comprises 286 residues: DegV domain-containing protein SPs1668 (286 aa).

One can recognise a DegV domain in the interval 3 to 282 (FTIMTDSTAD…PNTLAVFVIG (280 aa)). Hexadecanoate contacts are provided by Thr-62 and Ser-94.

In terms of biological role, may bind long-chain fatty acids, such as palmitate, and may play a role in lipid transport or fatty acid metabolism. The sequence is that of DegV domain-containing protein SPs1668 from Streptococcus pyogenes serotype M3 (strain SSI-1).